We begin with the raw amino-acid sequence, 187 residues long: Shikimate kinase (187 aa).

19–24 provides a ligand contact to ATP; that stretch reads GSGKST. Mg(2+) is bound at residue Ser-23. Substrate is bound by residues Asp-41, Arg-65, and Gly-87. Arg-124 contacts ATP. Arg-143 contacts substrate. Arg-160 contacts ATP.

This sequence belongs to the shikimate kinase family. As to quaternary structure, monomer. Requires Mg(2+) as cofactor.

It localises to the cytoplasm. It catalyses the reaction shikimate + ATP = 3-phosphoshikimate + ADP + H(+). The protein operates within metabolic intermediate biosynthesis; chorismate biosynthesis; chorismate from D-erythrose 4-phosphate and phosphoenolpyruvate: step 5/7. In terms of biological role, catalyzes the specific phosphorylation of the 3-hydroxyl group of shikimic acid using ATP as a cosubstrate. The chain is Shikimate kinase from Rippkaea orientalis (strain PCC 8801 / RF-1) (Cyanothece sp. (strain PCC 8801)).